Reading from the N-terminus, the 499-residue chain is Potassium voltage-gated channel subfamily A member 2 (499 aa).

Positions 1–26 (MTVATGDPVDEAAALPGHPQDTYDPE) are disordered. A tetramerization domain region spans residues 1 to 125 (MTVATGDPVD…YELGEEAMEM (125 aa)). Over 1–160 (MTVATGDPVD…LLFEYPESSG (160 aa)) the chain is Cytoplasmic. A helical membrane pass occupies residues 161-182 (PARIIAIVSVMVILISIVSFCL). The Extracellular segment spans residues 183–221 (ETLPIFRDENEDMHGGGVTFHTYSNSTIGYQQSTSFTDP). Asn-207 carries an N-linked (GlcNAc...) asparagine glycan. The helical transmembrane segment at 222-243 (FFIVETLCIIWFSFEFLVRFFA) threads the bilayer. Cys-244 is lipidated: S-palmitoyl cysteine. Over 244 to 254 (CPSKAGFFTNI) the chain is Cytoplasmic. The helical transmembrane segment at 255–275 (MNIIDIVAIIPYFITLGTELA) threads the bilayer. The Extracellular portion of the chain corresponds to 276-289 (EKPEDAQQGQQAMS). A helical; Voltage-sensor membrane pass occupies residues 290-310 (LAILRVIRLVRVFRIFKLSRH). Residues 311–325 (SKGLQILGQTLKASM) are Cytoplasmic-facing. The interval 312–325 (KGLQILGQTLKASM) is S4-S5 linker. A helical transmembrane segment spans residues 326 to 347 (RELGLLIFFLFIGVILFSSAVY). The Extracellular portion of the chain corresponds to 348–361 (FAEADERDSQFPSI). An intramembrane region (helical) is located at residues 362-373 (PDAFWWAVVSMT). Residues 374 to 379 (TVGYGD) carry the Selectivity filter motif. An intramembrane segment occupies 374 to 381 (TVGYGDMV). At 382–388 (PTTIGGK) the chain is on the extracellular side. A helical membrane pass occupies residues 389–417 (IVGSLCAIAGVLTIALPVPVIVSNFNYFY). Residues 418-499 (HRETEGEEQA…VNITKMLTDV (82 aa)) lie on the Cytoplasmic side of the membrane. Residue Tyr-429 is modified to Phosphotyrosine. Residues Ser-434, Ser-440, Ser-441, and Ser-449 each carry the phosphoserine modification. Tyr-458 carries the post-translational modification Phosphotyrosine. Ser-468 carries the phosphoserine modification. A PDZ-binding motif is present at residues 497 to 499 (TDV).

It belongs to the potassium channel family. A (Shaker) (TC 1.A.1.2) subfamily. Kv1.2/KCNA2 sub-subfamily. As to quaternary structure, homotetramer and heterotetramer with other channel-forming alpha subunits, such as KCNA1, KCNA4, KCNA5, KCNA6 and KCNA7. Channel activity is regulated by interaction with beta subunits, including KCNAB1 and KCNAB2. Identified in a complex with KCNA1 and KCNAB2. Identified in a complex with KCNA5 and KCNAB1. Identified in a complex with KCNA4 and FYN. Interacts with PTK2B. Interacts (via C-terminus) with CTTN. Interacts with ADAM22. Interacts with CNTNAP2. Interacts (via C-terminus) with the PDZ domains of DLG1, DLG2 and DLG4. Interacts (via N-terminal cytoplasmic domain) with RHOA (GTP-bound form); this regulates channel activity by reducing location at the cell surface in response to CHRM1 activation. Interacts with DRD2. Interacts with SIGMAR1; cocaine consumption leads to increased interaction. Interacts with ADAM11. Interacts with LYNX1. Phosphorylated on tyrosine residues; phosphorylation increases in response to ischemia. Phosphorylated on tyrosine residues by activated PTK2B/PYK2. Phosphorylation on tyrosine residues suppresses ion channel activity. Phosphorylated on tyrosine residues in response to CHRM1 activation; this abolishes interaction with CTTN. This is probably due to endocytosis of the phosphorylated channel subunits. Phosphorylated on serine residues in response to increased cAMP levels; phosphorylation is apparently not catalyzed by PKA. Post-translationally, N-glycosylated, with complex, sialylated N-glycans. As to expression, detected in brain. Detected in cerebellum. Detected in mitral cells in the olfactory bulb. Detected in cochlea. Detected in cerebellum, particularly in the basket cell axon plexus and in the terminal regions around Purkinje cells (at protein level). Detected in juxtaparanodal regions in sciatic nerve. Detected in Schwann cells from sciatic nerve. Detected in dopamine neurons in substantia nigra. Detected in large myelinated fibers in juxtaparanodes in the CA3 and CA1 areas of the hippocampus. Detected in brain, in punctae on fiber tracts in brain stem and spinal cord, and on axons in the juxtaparanodal regions of the node of Ranvier (at protein level). Detected in dopamine neurons in the midbrain.

It is found in the cell membrane. It localises to the membrane. The protein resides in the cell projection. Its subcellular location is the axon. The protein localises to the synapse. It is found in the endoplasmic reticulum membrane. It localises to the lamellipodium membrane. The protein resides in the synaptosome. Its subcellular location is the presynaptic cell membrane. The protein localises to the dendrite. It is found in the perikaryon. It localises to the cell junction. The protein resides in the paranodal septate junction. The catalysed reaction is K(+)(in) = K(+)(out). Its activity is regulated as follows. Inhibited by 4-aminopyridine (4-AP), dendrotoxin (DTX) and charybdotoxin (CTX), but not by tetraethylammonium (TEA). Inhibited by tityustoxin-K alpha (TsTX-Kalpha), a toxin that is highly specific for KCNA2. Inhibited by maurotoxin. Inhibited by kappaM conotoxins kappaM-RIIIJ and kappaM-RIIIK. Functionally, voltage-gated potassium channel that mediates transmembrane potassium transport in excitable membranes, primarily in the brain and the central nervous system, but also in the cardiovascular system. Prevents aberrant action potential firing and regulates neuronal output. Forms tetrameric potassium-selective channels through which potassium ions pass in accordance with their electrochemical gradient. The channel alternates between opened and closed conformations in response to the voltage difference across the membrane. Can form functional homotetrameric channels and heterotetrameric channels that contain variable proportions of KCNA1, KCNA2, KCNA4, KCNA5, KCNA6, KCNA7, and possibly other family members as well; channel properties depend on the type of alpha subunits that are part of the channel. Channel properties are modulated by cytoplasmic beta subunits that regulate the subcellular location of the alpha subunits and promote rapid inactivation of delayed rectifier potassium channels. In vivo, membranes probably contain a mixture of heteromeric potassium channel complexes, making it difficult to assign currents observed in intact tissues to any particular potassium channel family member. Homotetrameric KCNA2 forms a delayed-rectifier potassium channel that opens in response to membrane depolarization, followed by slow spontaneous channel closure. In contrast, a heteromultimer formed by KCNA2 and KCNA4 shows rapid inactivation. Contributes to the regulation of action potentials in neurons. KCNA2-containing channels play a presynaptic role and prevent hyperexcitability and aberrant action potential firing. Response to toxins that are selective for KCNA1, respectively for KCNA2, suggests that heteromeric potassium channels composed of both KCNA1 and KCNA2 play a role in pacemaking and regulate the output of deep cerebellar nuclear neurons. Response to toxins that are selective for KCNA2-containing potassium channels suggests that in Purkinje cells, dendritic subthreshold KCNA2-containing potassium channels prevent random spontaneous calcium spikes, suppressing dendritic hyperexcitability without hindering the generation of somatic action potentials, and thereby play an important role in motor coordination. KCNA2-containing channels play a role in GABAergic transmission from basket cells to Purkinje cells in the cerebellum, and thereby play an import role in motor coordination. Plays a role in the induction of long-term potentiation of neuron excitability in the CA3 layer of the hippocampus. May function as down-stream effector for G protein-coupled receptors and inhibit GABAergic inputs to basolateral amygdala neurons. May contribute to the regulation of neurotransmitter release, such as gamma-aminobutyric acid (GABA). Contributes to the regulation of the axonal release of the neurotransmitter dopamine. Reduced KCNA2 expression plays a role in the perception of neuropathic pain after peripheral nerve injury, but not acute pain. Plays a role in the regulation of the time spent in non-rapid eye movement (NREM) sleep. This chain is Potassium voltage-gated channel subfamily A member 2 (Kcna2), found in Mus musculus (Mouse).